Here is a 280-residue protein sequence, read N- to C-terminus: Aquaporin PIP2-7 (280 aa).

Methionine 1 bears the N-acetylmethionine mark. Topologically, residues 1 to 38 are cytoplasmic; sequence MSKEVSEEGKTHHGKDYVDPPPAPLLDMGELKSWSFYR. Lysine 3 is subject to N6,N6-dimethyllysine. Residues 39 to 59 traverse the membrane as a helical segment; the sequence is ALIAEFIATLLFLYVTVATVI. Topologically, residues 60–69 are extracellular; sequence GHKKQTGPCD. The chain crosses the membrane as a helical span at residues 70-90; that stretch reads GVGLLGIAWAFGGMIFVLVYC. The Cytoplasmic portion of the chain corresponds to 91–118; the sequence is TAGISGGHINPAVTFGLFLARKVSLVRA. An NPA 1 motif is present at residues 100–102; that stretch reads NPA. Residues 119-139 form a helical membrane-spanning segment; sequence LGYMIAQCLGAICGVGFVKAF. Residues 140–160 are Extracellular-facing; it reads MKTPYNTLGGGANTVADGYSK. The chain crosses the membrane as a helical span at residues 161–181; it reads GTALGAEIIGTFVLVYTVFSA. Residues 182–192 lie on the Cytoplasmic side of the membrane; it reads TDPKRSARDSH. The chain crosses the membrane as a helical span at residues 193–213; it reads IPVLAPLPIGFAVFMVHLATI. The Extracellular segment spans residues 214-242; that stretch reads PITGTGINPARSFGAAVIYNNEKAWDDQW. Residues 221 to 223 carry the NPA 2 motif; it reads NPA. A helical transmembrane segment spans residues 243-263; the sequence is IFWVGPFLGALAAAAYHQYIL. Residues 264-280 lie on the Cytoplasmic side of the membrane; sequence RASAIKALGSFRSNATN. 2 positions are modified to phosphoserine: serine 273 and serine 276. Threonine 279 carries the post-translational modification Phosphothreonine.

It belongs to the MIP/aquaporin (TC 1.A.8) family. PIP (TC 1.A.8.11) subfamily. Interacts with SYP61 and SYP121 in trafficking vesicles and at the plasma membrane. As to expression, highly expressed in flowers, expressed at low levels in siliques, and at low level in leaves and roots. Highly levels in elongating cells in both roots and shoots.

It is found in the cell membrane. Its function is as follows. Water channel required to facilitate the transport of water across cell membrane. May be involved in the osmoregulation in plants under high osmotic stress such as under a high salt condition. The polypeptide is Aquaporin PIP2-7 (Arabidopsis thaliana (Mouse-ear cress)).